A 325-amino-acid chain; its full sequence is Replication factor C small subunit (325 aa).

Glycine 45 to threonine 52 serves as a coordination point for ATP.

Belongs to the activator 1 small subunits family. RfcS subfamily. In terms of assembly, heteromultimer composed of small subunits (RfcS) and large subunits (RfcL).

Part of the RFC clamp loader complex which loads the PCNA sliding clamp onto DNA. This is Replication factor C small subunit from Sulfolobus acidocaldarius (strain ATCC 33909 / DSM 639 / JCM 8929 / NBRC 15157 / NCIMB 11770).